The chain runs to 817 residues: Rho GTPase-activating protein gacII (817 aa).

One can recognise a Rho-GAP domain in the interval 20 to 204 (TTIVKIGTPK…TLIEEFQYIS (185 aa)). An SH3 domain is found at 238-298 (EDYLIAKANT…SQTYVDIIDI (61 aa)). The segment covering 318-339 (ASTILHTPPTSSSSSSSSSSSS) has biased composition (low complexity). Disordered stretches follow at residues 318 to 638 (ASTI…NIPV), 691 to 771 (LGGQ…QQQQ), and 783 to 817 (LPPQ…FNKN). Residues 340 to 358 (ILLTDNQPKLCSSTPRINN) show a composition bias toward polar residues. A compositionally biased stretch (low complexity) spans 359-391 (SPSSFSPSLSSTTPQLLVQQSPRQSPRQIPSIS). The span at 396 to 438 (PNNTNQPSFGHGTLQRTSTGYFSSKPLSISQPINMSKPTNMSP) shows a compositional bias: polar residues. A compositionally biased stretch (pro residues) spans 461-471 (PPLPTKPPPLT). Positions 472–498 (IPSSSSLPTTPIKQQPQQPIQQPLTPQ) are enriched in low complexity. Residues 509 to 532 (LSSSVNTANTGNCANILSPNSDRY) are compositionally biased toward polar residues. Low complexity-rich tracts occupy residues 534 to 568 (SSRS…SSTS), 577 to 587 (KSKSSKNSPSK), and 607 to 624 (ITTT…TIAT). Positions 625–635 (TPPPPSKPLPN) are enriched in pro residues. Residues 705 to 722 (KSQSSYLDNNNLPSRNTN) show a composition bias toward polar residues. Residues 725-734 (NLPPRPPPLN) show a composition bias toward pro residues. Composition is skewed to low complexity over residues 735 to 744 (IPQQQQQYKP) and 752 to 771 (QSPQ…QQQQ). Residues 785 to 803 (PQNTNLSGKNLQRSSTSML) show a composition bias toward polar residues. A compositionally biased stretch (pro residues) spans 807 to 817 (LPPPPFSFNKN).

It is found in the cytoplasm. Its function is as follows. Rho GTPase-activating protein involved in the signal transduction pathway. The polypeptide is Rho GTPase-activating protein gacII (gacII) (Dictyostelium discoideum (Social amoeba)).